We begin with the raw amino-acid sequence, 400 residues long: Phosphoglycerate kinase (400 aa).

Substrate contacts are provided by residues 21-23 (DLN), arginine 36, 59-62 (HLGR), arginine 116, and arginine 149. ATP is bound by residues lysine 200, glutamate 317, and 343–346 (GGDT).

The protein belongs to the phosphoglycerate kinase family. As to quaternary structure, monomer.

It localises to the cytoplasm. The enzyme catalyses (2R)-3-phosphoglycerate + ATP = (2R)-3-phospho-glyceroyl phosphate + ADP. It participates in carbohydrate degradation; glycolysis; pyruvate from D-glyceraldehyde 3-phosphate: step 2/5. This is Phosphoglycerate kinase from Blochmanniella floridana.